The sequence spans 151 residues: Flagellar assembly factor FliW (151 aa).

It belongs to the FliW family. In terms of assembly, interacts with translational regulator CsrA and flagellin(s).

The protein resides in the cytoplasm. In terms of biological role, acts as an anti-CsrA protein, binds CsrA and prevents it from repressing translation of its target genes, one of which is flagellin. Binds to flagellin and participates in the assembly of the flagellum. The sequence is that of Flagellar assembly factor FliW from Lachnospira eligens (strain ATCC 27750 / DSM 3376 / VPI C15-48 / C15-B4) (Eubacterium eligens).